A 2752-amino-acid chain; its full sequence is Protein PFF0380w (2752 aa).

The span at 20–30 (EREKEEEEKKR) shows a compositional bias: basic and acidic residues. Disordered stretches follow at residues 20–44 (EREK…NNYN), 139–160 (HIHK…NNDY), 634–678 (NDIV…INMK), 1048–1130 (DKKS…SGEN), and 1153–1172 (ENLQ…NNNG). The span at 32–44 (YNISNNNNNNNYN) shows a compositional bias: low complexity. Residues 142–157 (KNNDINNIHEKNDKSN) show a composition bias toward basic and acidic residues. The segment covering 640–674 (NNNNNNNNNNNNNNNNNNNNNNNNNNNNNNNNNNN) has biased composition (low complexity). A compositionally biased stretch (basic and acidic residues) spans 1048–1060 (DKKSEDMKEDTPT). Positions 1061 to 1075 (RGENLQRGQNLQRGD) are enriched in polar residues. The segment covering 1076-1090 (NLQRGDNLQRGDNLQ) has biased composition (basic and acidic residues). Residues 1091–1130 (RGDNLQNGDNLQNGDNLQRGDNLQNGENLQSGENLQSGEN) are compositionally biased toward polar residues. Residues 1162 to 1172 (NNILYPYNNNG) are compositionally biased toward low complexity. Residues 1277–1354 (TLEEVLEIIS…LHRTHIQHKK (78 aa)) form the HTH OST-type domain. Disordered stretches follow at residues 1457–1499 (DIKQ…NNIS), 1958–1999 (AKNS…YYML), 2063–2099 (KRKN…NNDK), and 2501–2537 (DENN…FLHN). 2 stretches are compositionally biased toward low complexity: residues 1469–1499 (NNIN…NNIS) and 1962–1975 (NQEN…NYNN). Residues 1976 to 1994 (NDDDDDNNNNNNDDDDDDN) are compositionally biased toward acidic residues. 2 stretches are compositionally biased toward low complexity: residues 2068 to 2095 (NIHN…NNDN) and 2501 to 2526 (DENN…VLHN).

This is Protein PFF0380w from Plasmodium falciparum (isolate 3D7).